The primary structure comprises 220 residues: Aklanonic acid methyltransferase DauC (220 aa).

Belongs to the methyltransferase superfamily. DnrC family. In terms of assembly, homodimer.

The enzyme catalyses aklanonate + S-adenosyl-L-methionine = methyl aklanonate + S-adenosyl-L-homocysteine. It participates in antibiotic biosynthesis; daunorubicin biosynthesis. Its pathway is antibiotic biosynthesis; carminomycin biosynthesis. It functions in the pathway antibiotic biosynthesis; rhodomycin biosynthesis. The protein operates within antibiotic biosynthesis; aclacinomycin biosynthesis. Functionally, involved in the biosynthesis of aklavinone which is an important precursor common to the formation of the clinically significant anthracyclines such as carminomycin, daunorubicin (daunomycin), rhodomycin, aclacinomycin T (aklavin) and aclacinomycin A (aclarubicin). These compounds are aromatic polyketide antibiotics that exhibit high cytotoxicity and are widely applied in the chemotherapy of a variety of cancers. Catalyzes the methyl esterification of aklanonic acid to yield aklanonic acid methyl ester. This is Aklanonic acid methyltransferase DauC (dauC) from Streptomyces sp. (strain C5).